The following is a 55-amino-acid chain: uncharacterized protein (55 aa).

A helical membrane pass occupies residues isoleucine 27–phenylalanine 47.

The protein resides in the membrane. This is an uncharacterized protein from Acheta domesticus (House cricket).